The following is a 227-amino-acid chain: Cytochrome c oxidase subunit 2 (227 aa).

Topologically, residues 1–14 (MAYPLQMGLQDATS) are mitochondrial intermembrane. A helical transmembrane segment spans residues 15-45 (PIMEELLHFHDHTLMIVFLISSLVLYIISLM). Residues 46-59 (LTTKLTHTSTMDAQ) lie on the Mitochondrial matrix side of the membrane. A helical transmembrane segment spans residues 60-87 (EVETVWTILPAIILILIALPSLRILYMM). Topologically, residues 88–227 (DEINNPSLTV…HFEKWSTSML (140 aa)) are mitochondrial intermembrane. Residues histidine 161, cysteine 196, glutamate 198, cysteine 200, histidine 204, and methionine 207 each contribute to the Cu cation site. Residue glutamate 198 coordinates Mg(2+).

Belongs to the cytochrome c oxidase subunit 2 family. In terms of assembly, component of the cytochrome c oxidase (complex IV, CIV), a multisubunit enzyme composed of 14 subunits. The complex is composed of a catalytic core of 3 subunits MT-CO1, MT-CO2 and MT-CO3, encoded in the mitochondrial DNA, and 11 supernumerary subunits COX4I, COX5A, COX5B, COX6A, COX6B, COX6C, COX7A, COX7B, COX7C, COX8 and NDUFA4, which are encoded in the nuclear genome. The complex exists as a monomer or a dimer and forms supercomplexes (SCs) in the inner mitochondrial membrane with NADH-ubiquinone oxidoreductase (complex I, CI) and ubiquinol-cytochrome c oxidoreductase (cytochrome b-c1 complex, complex III, CIII), resulting in different assemblies (supercomplex SCI(1)III(2)IV(1) and megacomplex MCI(2)III(2)IV(2)). Found in a complex with TMEM177, COA6, COX18, COX20, SCO1 and SCO2. Interacts with TMEM177 in a COX20-dependent manner. Interacts with COX20. Interacts with COX16. Cu cation serves as cofactor.

It is found in the mitochondrion inner membrane. The enzyme catalyses 4 Fe(II)-[cytochrome c] + O2 + 8 H(+)(in) = 4 Fe(III)-[cytochrome c] + 2 H2O + 4 H(+)(out). Its function is as follows. Component of the cytochrome c oxidase, the last enzyme in the mitochondrial electron transport chain which drives oxidative phosphorylation. The respiratory chain contains 3 multisubunit complexes succinate dehydrogenase (complex II, CII), ubiquinol-cytochrome c oxidoreductase (cytochrome b-c1 complex, complex III, CIII) and cytochrome c oxidase (complex IV, CIV), that cooperate to transfer electrons derived from NADH and succinate to molecular oxygen, creating an electrochemical gradient over the inner membrane that drives transmembrane transport and the ATP synthase. Cytochrome c oxidase is the component of the respiratory chain that catalyzes the reduction of oxygen to water. Electrons originating from reduced cytochrome c in the intermembrane space (IMS) are transferred via the dinuclear copper A center (CU(A)) of subunit 2 and heme A of subunit 1 to the active site in subunit 1, a binuclear center (BNC) formed by heme A3 and copper B (CU(B)). The BNC reduces molecular oxygen to 2 water molecules using 4 electrons from cytochrome c in the IMS and 4 protons from the mitochondrial matrix. This chain is Cytochrome c oxidase subunit 2 (MT-CO2), found in Phoca vitulina (Harbor seal).